Reading from the N-terminus, the 98-residue chain is Cobalt transport protein CbiN (98 aa).

2 helical membrane-spanning segments follow: residues 6-26 (VLMILGVIILTLAPLIMYSGL) and 68-88 (SLLFALQAAIGAIIIGYFFGY).

This sequence belongs to the CbiN family. In terms of assembly, forms an energy-coupling factor (ECF) transporter complex composed of an ATP-binding protein (A component, CbiO), a transmembrane protein (T component, CbiQ) and 2 possible substrate-capture proteins (S components, CbiM and CbiN) of unknown stoichimetry.

Its subcellular location is the cell membrane. The protein operates within cofactor biosynthesis; adenosylcobalamin biosynthesis. Part of the energy-coupling factor (ECF) transporter complex CbiMNOQ involved in cobalt import. The polypeptide is Cobalt transport protein CbiN (Methanococcus maripaludis (strain DSM 14266 / JCM 13030 / NBRC 101832 / S2 / LL)).